The primary structure comprises 409 residues: Argininosuccinate synthase (409 aa).

ATP is bound by residues Ala-12–Ser-20 and Ala-39. Residues Tyr-90 and Ser-95 each coordinate L-citrulline. Gly-120 contacts ATP. L-aspartate-binding residues include Thr-122, Asn-126, and Asp-127. Asn-126 lines the L-citrulline pocket. Positions 130, 181, 190, 266, and 278 each coordinate L-citrulline.

It belongs to the argininosuccinate synthase family. Type 1 subfamily. Homotetramer.

It is found in the cytoplasm. The catalysed reaction is L-citrulline + L-aspartate + ATP = 2-(N(omega)-L-arginino)succinate + AMP + diphosphate + H(+). The protein operates within amino-acid biosynthesis; L-arginine biosynthesis; L-arginine from L-ornithine and carbamoyl phosphate: step 2/3. This chain is Argininosuccinate synthase, found in Acidiphilium cryptum (strain JF-5).